Consider the following 215-residue polypeptide: MOB kinase activator-like 1B (215 aa).

The segment at 1 to 25 (MSLFGLGRNQKTFRPKKSAPSGTKG) is disordered. Zn(2+) contacts are provided by Cys79, Cys84, His161, and His166.

Belongs to the MOB1/phocein family. As to quaternary structure, interacts with SIK1. In terms of tissue distribution, expression is detected along the vasculature in cotyledons, hypocotyls and roots of 3- to 4-day-old seedlings.

The protein is MOB kinase activator-like 1B of Arabidopsis thaliana (Mouse-ear cress).